The chain runs to 128 residues: Aspartate 1-decarboxylase (128 aa).

Residue Ser-25 is the Schiff-base intermediate with substrate; via pyruvic acid of the active site. At Ser-25 the chain carries Pyruvic acid (Ser). Substrate is bound at residue Thr-57. The Proton donor role is filled by Tyr-58. A substrate-binding site is contributed by 73–75; sequence GAA.

This sequence belongs to the PanD family. As to quaternary structure, heterooctamer of four alpha and four beta subunits. Pyruvate is required as a cofactor. In terms of processing, is synthesized initially as an inactive proenzyme, which is activated by self-cleavage at a specific serine bond to produce a beta-subunit with a hydroxyl group at its C-terminus and an alpha-subunit with a pyruvoyl group at its N-terminus.

It localises to the cytoplasm. It carries out the reaction L-aspartate + H(+) = beta-alanine + CO2. The protein operates within cofactor biosynthesis; (R)-pantothenate biosynthesis; beta-alanine from L-aspartate: step 1/1. Functionally, catalyzes the pyruvoyl-dependent decarboxylation of aspartate to produce beta-alanine. The protein is Aspartate 1-decarboxylase of Chlorobium limicola (strain DSM 245 / NBRC 103803 / 6330).